We begin with the raw amino-acid sequence, 334 residues long: Transcription factor MYB92 (334 aa).

HTH myb-type domains lie at 9 to 61 (DSGL…TNYL) and 62 to 116 (RPDI…KKKL). DNA-binding regions (H-T-H motif) lie at residues 37–61 (WRAL…TNYL) and 89–112 (WSTI…NTHL).

Interacts with FBX5. As to expression, highly expressed in roots and at lower levels in stems, flowers and siliques.

The protein resides in the nucleus. Probable transcription factor. The chain is Transcription factor MYB92 from Arabidopsis thaliana (Mouse-ear cress).